Reading from the N-terminus, the 610-residue chain is Autophagy-related protein 22-1 (610 aa).

The segment covering 1 to 11 (MAFTPSSPPSP) has biased composition (pro residues). Positions 1–29 (MAFTPSSPPSPAADASQRPSRYPGEDTTP) are disordered. Residues 35-55 (ILGWYAYGIAAEVFAVCGVGS) form a helical membrane-spanning segment. A glycan (N-linked (GlcNAc...) asparagine) is linked at Asn90. Transmembrane regions (helical) follow at residues 120-140 (SFAM…LISF), 152-171 (TLLL…FVFV), and 189-209 (CLGS…ANDP). The disordered stretch occupies residues 229–265 (GQFEPRDSFSERNPEFESQYTPGIGLGSKPSTNATSP). A compositionally biased stretch (basic and acidic residues) spans 232 to 243 (EPRDSFSERNPE). A glycan (N-linked (GlcNAc...) asparagine) is linked at Asn261. Helical transmembrane passes span 278 to 298 (VGLG…LLFA), 310 to 330 (TLPL…FTMV), 384 to 404 (VFLV…GTAI), 418 to 438 (VGCL…LWPV), 453 to 473 (LCIA…IPLF), 488 to 510 (FPLA…SFFG), 522 to 544 (YALY…GMLI), and 553 to 573 (GFFF…MVNA). The disordered stretch occupies residues 588-610 (AKGQESETGEPGEEAEGLLARGA). A compositionally biased stretch (acidic residues) spans 594–603 (ETGEPGEEAE).

This sequence belongs to the ATG22 family.

It localises to the vacuole membrane. Its function is as follows. Vacuolar effluxer which mediate the efflux of amino acids resulting from autophagic degradation. The release of autophagic amino acids allows the maintenance of protein synthesis and viability during nitrogen starvation. This is Autophagy-related protein 22-1 (atg22-1) from Aspergillus terreus (strain NIH 2624 / FGSC A1156).